A 523-amino-acid polypeptide reads, in one-letter code: Sensory neuron membrane protein 1 (523 aa).

The Cytoplasmic portion of the chain corresponds to 1–11; that stretch reads MQLPRELKYAA. Residues 12-32 form a helical membrane-spanning segment; sequence IAGGVALFGLIFGWVLFPTIL. Residues 33-458 are Extracellular-facing; sequence KSQLKKEMAL…HQLFIPKRVV (426 aa). 2 N-linked (GlcNAc...) asparagine glycosylation sites follow: N67 and N229. Disulfide bonds link C268-C333, C297-C352, and C335-C341. A glycan (N-linked (GlcNAc...) asparagine) is linked at N440. Residues 459-479 traverse the membrane as a helical segment; sequence GVLRWWMVSFGSLGAVIGIVF. Topologically, residues 480–523 are cytoplasmic; it reads HFRDHIMRLAVSGDTKVSKVTPEEEEQKDISVIGQAQEPAKVNI.

Belongs to the CD36 family.

The protein resides in the cell membrane. Plays an olfactory role that is not restricted to pheromone sensitivity. The protein is Sensory neuron membrane protein 1 of Helicoverpa armigera (Cotton bollworm).